The sequence spans 55 residues: UPF0391 membrane protein Sfum_0248 (55 aa).

2 helical membrane-spanning segments follow: residues 4–24 (WALIFLAVAIAAGVLGFGGII) and 28–48 (AWIAQVLFILFLVFFLVSLLS).

The protein belongs to the UPF0391 family.

Its subcellular location is the cell membrane. The protein is UPF0391 membrane protein Sfum_0248 of Syntrophobacter fumaroxidans (strain DSM 10017 / MPOB).